An 897-amino-acid polypeptide reads, in one-letter code: DNA mismatch repair protein MutS (897 aa).

654–661 is an ATP binding site; that stretch reads GPNMAGKS.

Belongs to the DNA mismatch repair MutS family.

Its function is as follows. This protein is involved in the repair of mismatches in DNA. It is possible that it carries out the mismatch recognition step. This protein has a weak ATPase activity. The sequence is that of DNA mismatch repair protein MutS from Maricaulis maris (strain MCS10) (Caulobacter maris).